Reading from the N-terminus, the 537-residue chain is Lysine--tRNA ligase (537 aa).

Residues 30 to 38 (PSGNIHIGN) carry the 'HIGH' region motif. Positions 276-280 (AMSSS) match the 'KMSKS' region motif.

Belongs to the class-I aminoacyl-tRNA synthetase family.

It is found in the cytoplasm. The enzyme catalyses tRNA(Lys) + L-lysine + ATP = L-lysyl-tRNA(Lys) + AMP + diphosphate. This Methanosarcina barkeri protein is Lysine--tRNA ligase.